Consider the following 145-residue polypeptide: Large ribosomal subunit protein uL11 (145 aa).

The protein belongs to the universal ribosomal protein uL11 family. In terms of assembly, part of the ribosomal stalk of the 50S ribosomal subunit. Interacts with L10 and the large rRNA to form the base of the stalk. L10 forms an elongated spine to which L12 dimers bind in a sequential fashion forming a multimeric L10(L12)X complex. In terms of processing, one or more lysine residues are methylated.

Forms part of the ribosomal stalk which helps the ribosome interact with GTP-bound translation factors. The protein is Large ribosomal subunit protein uL11 of Sulfurihydrogenibium sp. (strain YO3AOP1).